Here is a 118-residue protein sequence, read N- to C-terminus: UPF0102 protein NE0719 (118 aa).

Belongs to the UPF0102 family.

This Nitrosomonas europaea (strain ATCC 19718 / CIP 103999 / KCTC 2705 / NBRC 14298) protein is UPF0102 protein NE0719.